A 158-amino-acid polypeptide reads, in one-letter code: MQGRLSAWLVKHGLVHRSLGFDYQGIETLQIKPEDWHSIAVILYVYGYNYLRSQCAYDVSPGGLLASVYHLTRIECGIYQPEEVCIKIFVPRNNPRIPSIFWVWKSADFQERESYDMLGISYDNHPRLKRILMPESWIGWPLRKDYITPNFYEIQDAH.

This sequence belongs to the complex I 30 kDa subunit family. In terms of assembly, NDH is composed of at least 16 different subunits, 5 of which are encoded in the nucleus.

It is found in the plastid. The protein localises to the chloroplast thylakoid membrane. It carries out the reaction a plastoquinone + NADH + (n+1) H(+)(in) = a plastoquinol + NAD(+) + n H(+)(out). The catalysed reaction is a plastoquinone + NADPH + (n+1) H(+)(in) = a plastoquinol + NADP(+) + n H(+)(out). Its function is as follows. NDH shuttles electrons from NAD(P)H:plastoquinone, via FMN and iron-sulfur (Fe-S) centers, to quinones in the photosynthetic chain and possibly in a chloroplast respiratory chain. The immediate electron acceptor for the enzyme in this species is believed to be plastoquinone. Couples the redox reaction to proton translocation, and thus conserves the redox energy in a proton gradient. This Lotus japonicus (Lotus corniculatus var. japonicus) protein is NAD(P)H-quinone oxidoreductase subunit J, chloroplastic.